We begin with the raw amino-acid sequence, 105 residues long: Urease subunit beta (105 aa).

This sequence belongs to the urease beta subunit family. As to quaternary structure, heterotrimer of UreA (gamma), UreB (beta) and UreC (alpha) subunits. Three heterotrimers associate to form the active enzyme.

The protein localises to the cytoplasm. The catalysed reaction is urea + 2 H2O + H(+) = hydrogencarbonate + 2 NH4(+). It functions in the pathway nitrogen metabolism; urea degradation; CO(2) and NH(3) from urea (urease route): step 1/1. The sequence is that of Urease subunit beta from Marinobacter nauticus (strain ATCC 700491 / DSM 11845 / VT8) (Marinobacter aquaeolei).